We begin with the raw amino-acid sequence, 351 residues long: Transmembrane protein 255A (351 aa).

Helical transmembrane passes span 30–50 (IYVT…GLAA), 57–77 (VTVG…LGII), 89–109 (LVAS…CAIV), and 226–246 (TILN…LGGF). The segment at 302–331 (FPSSPPSGLSDEQEPQSPSPSPSYMWSSSA) is disordered.

The protein belongs to the TMEM255 family.

The protein localises to the membrane. This is Transmembrane protein 255A (Tmem255a) from Mus musculus (Mouse).